The sequence spans 774 residues: MAEVAVGQASDLVPSEMDHEVIYSHLQGPLEGTIEPATPTEVVSNGAPLQPAPAELANSQGGAHVQPAPAEVVSSQDGLPTLQPLPPASIDLTEEVQPSEENMEVVNPGTSEEPSQGSGANPTAGAARSVSMNNFISGLQRLHNMLELLRPPPADHSVGPIRTRRRMAPILRARAGESQRQDNGRYVPHTPLYAYFQVSRSQPYPLPAAHDSETRNPPSGTDSDSDGSAEDEEVVVQAEEPEANIPEQGVIATDQEATSVTGDDAVPKESPQKPNMLSAMEDEEGETCTICLEQWTNAGDHRISALRCGHLFGFRCISKWLKGQTRKCPQCNKKAKHSDIVVIYARSLRALDTSEQERMKSDLLNEQMLRKQAELESAQCRLQLQVLIDKCTKLNSRVQDLEKFVVRHQNSAAQQCSRSKALCGKCLSSSQSPGKYSSEKTFTISQTGKCRILAYCDGLSCLVASQPSPQASFLPGFGVKMLSTANMKSSQYIPMHNKQIRGLSFSSQSKGLLLSASLDCTIKLTSLETNTVVQTYNTGRPVWSCCWCLDENNYVYAGLASGSILIYDLRNTNTYIQELVPQKARCPLVSLSYLPKAAVAAFPYGGVLAGTLENASFWELKSDFSHKPHVLSLEPGGFVDFQTESSTRHCLVTYRPDKSHNTVRTVLLEMSYKLDDAGEPVCSCLPVQTFLGGPTCKLLTKSAIFQSPENNGNVLVCTGDEASQSTLLWNAGSGLLLQNLKAGEPVLDICPFETNQNSYLATLTEKTVHMYKWE.

Disordered stretches follow at residues 32 to 126 (GTIE…TAGA) and 203 to 281 (PYPL…SAME). Phosphoserine; by ATM and ATR is present on residues Ser-59 and Ser-75. Residues 92 to 103 (LTEEVQPSEENM) are compositionally biased toward acidic residues. Positions 108-121 (PGTSEEPSQGSGAN) are enriched in polar residues. Residues 223–242 (SDSDGSAEDEEVVVQAEEPE) show a composition bias toward acidic residues. Residues 288-332 (CTICLEQWTNAGDHRISALRCGHLFGFRCISKWLKGQTRKCPQCN) form an RING-type; degenerate zinc finger. Residues 358–403 (RMKSDLLNEQMLRKQAELESAQCRLQLQVLIDKCTKLNSRVQDLEK) are a coiled coil. WD repeat units follow at residues 493–535 (IPMH…VVQT), 536–568 (YNTG…LIYD), and 583–628 (KARC…SHKP).

As to quaternary structure, interacts with MDM2 and p53/TP53. Binds to the RPA complex via direct interaction with RPA2. Interacts with RAD51. In terms of processing, phosphorylated at Ser-59 and Ser-75 upon DNA damage by ATM or ATR. ATM phosphorylation occurs at early times upon DNA damage, while ATR is the major kinase at later times. Phosphorylation by ATM and ATR is required to stabilize p53/TP53. Part of the phosphorylation depends upon RPA2 presence.

The protein resides in the nucleus. Its subcellular location is the PML body. The protein localises to the cytoplasm. It carries out the reaction S-ubiquitinyl-[E2 ubiquitin-conjugating enzyme]-L-cysteine + [acceptor protein]-L-lysine = [E2 ubiquitin-conjugating enzyme]-L-cysteine + N(6)-ubiquitinyl-[acceptor protein]-L-lysine.. It functions in the pathway protein modification; protein ubiquitination. In terms of biological role, E3 ubiquitin-protein ligase required for the repair of DNA interstrand cross-links (ICL) in response to DNA damage. Plays a key role in RPA-mediated DNA damage signaling and repair. Acts by mediating ubiquitination of the RPA complex (RPA1, RPA2 and RPA3 subunits) and RAD51 at stalled replication forks, leading to remove them from DNA damage sites and promote homologous recombination. Also mediates the ubiquitination of p53/TP53 in the late response to DNA damage, and acts as a positive regulator of p53/TP53 stability, thereby regulating the G1/S DNA damage checkpoint. May act by catalyzing the formation of short polyubiquitin chains on p53/TP53 that are not targeted to the proteasome. In response to ionizing radiation, interacts with MDM2 and enhances p53/TP53 ubiquitination, possibly by restricting MDM2 from extending polyubiquitin chains on ubiquitinated p53/TP53. Required to translesion DNA synthesis across DNA-protein cross-link adducts by catalyzing ubiquitination of proteins on single-stranded DNA (ssDNA). This is E3 ubiquitin-protein ligase RFWD3 (Rfwd3) from Mus musculus (Mouse).